A 109-amino-acid chain; its full sequence is MTSEQLLAEIREANLTYLMLAQTLIRQDKAEAVFRLGLNEEAADILASLSAAQVLKLASRNTLLCSFRVDDELVWSLLTSHNTPRKAASEATNTLHANILMASRVSEVL.

The protein belongs to the FlhD family. As to quaternary structure, homodimer; disulfide-linked. Forms a heterohexamer composed of two FlhC and four FlhD subunits. Each FlhC binds a FlhD dimer, forming a heterotrimer, and a hexamer assembles by dimerization of two heterotrimers.

It localises to the cytoplasm. Functionally, functions in complex with FlhC as a master transcriptional regulator that regulates transcription of several flagellar and non-flagellar operons by binding to their promoter region. Activates expression of class 2 flagellar genes, including fliA, which is a flagellum-specific sigma factor that turns on the class 3 genes. Also regulates genes whose products function in a variety of physiological pathways. The sequence is that of Flagellar transcriptional regulator FlhD from Acidovorax sp. (strain JS42).